The chain runs to 362 residues: Protein RecA (362 aa).

Position 77-84 (77-84 (GPESSGKT)) interacts with ATP.

Belongs to the RecA family.

The protein localises to the cytoplasm. Its function is as follows. Can catalyze the hydrolysis of ATP in the presence of single-stranded DNA, the ATP-dependent uptake of single-stranded DNA by duplex DNA, and the ATP-dependent hybridization of homologous single-stranded DNAs. It interacts with LexA causing its activation and leading to its autocatalytic cleavage. The chain is Protein RecA from Rhizobium etli (strain CIAT 652).